The following is a 135-amino-acid chain: Mu-like prophage FluMu protein gp46 (135 aa).

It to phage Mu protein gp46.

In Haemophilus influenzae (strain ATCC 51907 / DSM 11121 / KW20 / Rd), this protein is Mu-like prophage FluMu protein gp46.